A 319-amino-acid polypeptide reads, in one-letter code: Pantothenate kinase (319 aa).

101 to 108 (GSVAVGKS) is an ATP binding site.

It belongs to the prokaryotic pantothenate kinase family.

The protein resides in the cytoplasm. It catalyses the reaction (R)-pantothenate + ATP = (R)-4'-phosphopantothenate + ADP + H(+). Its pathway is cofactor biosynthesis; coenzyme A biosynthesis; CoA from (R)-pantothenate: step 1/5. This is Pantothenate kinase from Clavibacter sepedonicus (Clavibacter michiganensis subsp. sepedonicus).